The following is a 239-amino-acid chain: ATP-dependent dethiobiotin synthetase BioD (239 aa).

15–20 (EIGKTF) contacts ATP. Thr-19 lines the Mg(2+) pocket. Lys-40 is a catalytic residue. ATP contacts are provided by residues Asp-57, 118-121 (EGVG), and 178-179 (NH). Mg(2+)-binding residues include Asp-57 and Glu-118.

It belongs to the dethiobiotin synthetase family. As to quaternary structure, homodimer. Mg(2+) serves as cofactor.

The protein localises to the cytoplasm. The enzyme catalyses (7R,8S)-7,8-diammoniononanoate + CO2 + ATP = (4R,5S)-dethiobiotin + ADP + phosphate + 3 H(+). It participates in cofactor biosynthesis; biotin biosynthesis; biotin from 7,8-diaminononanoate: step 1/2. In terms of biological role, catalyzes a mechanistically unusual reaction, the ATP-dependent insertion of CO2 between the N7 and N8 nitrogen atoms of 7,8-diaminopelargonic acid (DAPA, also called 7,8-diammoniononanoate) to form a ureido ring. The sequence is that of ATP-dependent dethiobiotin synthetase BioD from Burkholderia orbicola (strain MC0-3).